A 637-amino-acid chain; its full sequence is Extracellular metalloproteinase 2 (637 aa).

Residues 1–20 (MRSFLLASLASVATLKSAQA) form the signal peptide. Residues 21-244 (HPAHSTRGLS…VHAVVDYSAD (224 aa)) constitute a propeptide that is removed on maturation. N-linked (GlcNAc...) asparagine glycans are attached at residues Asn-302, Asn-328, Asn-337, and Asn-413. His-430 provides a ligand contact to Zn(2+). Glu-431 is an active-site residue. A Zn(2+)-binding site is contributed by His-434.

This sequence belongs to the peptidase M36 family. Zn(2+) is required as a cofactor.

It localises to the secreted. Functionally, secreted metalloproteinase that allows assimilation of proteinaceous substrates. The chain is Extracellular metalloproteinase 2 (MEP2) from Phaeosphaeria nodorum (strain SN15 / ATCC MYA-4574 / FGSC 10173) (Glume blotch fungus).